The following is a 599-amino-acid chain: Translation initiation factor IF-2 (599 aa).

Residues 111–278 (PRPPIITVMG…SILLLAEILE (168 aa)) form the tr-type G domain. The G1 stretch occupies residues 120–127 (GHVDHGKT). GTP is bound at residue 120 to 127 (GHVDHGKT). The tract at residues 145-149 (GITQH) is G2. The interval 166–169 (DTPG) is G3. GTP contacts are provided by residues 166 to 170 (DTPGH) and 220 to 223 (NKMD). Residues 220–223 (NKMD) form a G4 region. The G5 stretch occupies residues 256 to 258 (SAL).

The protein belongs to the TRAFAC class translation factor GTPase superfamily. Classic translation factor GTPase family. IF-2 subfamily.

The protein localises to the cytoplasm. Functionally, one of the essential components for the initiation of protein synthesis. Protects formylmethionyl-tRNA from spontaneous hydrolysis and promotes its binding to the 30S ribosomal subunits. Also involved in the hydrolysis of GTP during the formation of the 70S ribosomal complex. This Mesomycoplasma hyopneumoniae (strain 232) (Mycoplasma hyopneumoniae) protein is Translation initiation factor IF-2.